A 309-amino-acid polypeptide reads, in one-letter code: uncharacterized protein (309 aa).

The tat-type signal signal peptide spans 1-32; the sequence is MTGTAPVSRRQYLGTAGAIIGTTAGCLTGADA.

Belongs to the bacterial solute-binding protein 1 family. WtpA subfamily. In terms of processing, predicted to be exported by the Tat system. The position of the signal peptide cleavage has not been experimentally proven.

This is an uncharacterized protein from Halobacterium salinarum (strain ATCC 700922 / JCM 11081 / NRC-1) (Halobacterium halobium).